Here is a 393-residue protein sequence, read N- to C-terminus: S-adenosylmethionine synthase 2 (393 aa).

Glutamate 9 provides a ligand contact to Mg(2+). Histidine 15 serves as a coordination point for ATP. Glutamate 43 contacts K(+). L-methionine contacts are provided by glutamate 56 and glutamine 99. ATP contacts are provided by residues 167–169 (DGK), 235–238 (SGRF), aspartate 246, 252–253 (RK), alanine 269, lysine 273, and lysine 277. Aspartate 246 is a binding site for L-methionine. Lysine 277 serves as a coordination point for L-methionine.

Belongs to the AdoMet synthase family. Homotetramer. Mn(2+) serves as cofactor. Requires Mg(2+) as cofactor. It depends on Co(2+) as a cofactor. The cofactor is K(+).

The protein resides in the cytoplasm. The catalysed reaction is L-methionine + ATP + H2O = S-adenosyl-L-methionine + phosphate + diphosphate. It functions in the pathway amino-acid biosynthesis; S-adenosyl-L-methionine biosynthesis; S-adenosyl-L-methionine from L-methionine: step 1/1. Catalyzes the formation of S-adenosylmethionine from methionine and ATP. The reaction comprises two steps that are both catalyzed by the same enzyme: formation of S-adenosylmethionine (AdoMet) and triphosphate, and subsequent hydrolysis of the triphosphate. This chain is S-adenosylmethionine synthase 2 (METK2), found in Populus trichocarpa (Western balsam poplar).